We begin with the raw amino-acid sequence, 161 residues long: Large ribosomal subunit protein bL17 (161 aa).

Positions 126–161 (TAAKKAPKTRRSRKKATASVAEAPTAEAASEEKAAE) are disordered. Residues 130–141 (KAPKTRRSRKKA) are compositionally biased toward basic residues. Residues 142–153 (TASVAEAPTAEA) show a composition bias toward low complexity.

This sequence belongs to the bacterial ribosomal protein bL17 family. As to quaternary structure, part of the 50S ribosomal subunit. Contacts protein L32.

This Parabacteroides distasonis (strain ATCC 8503 / DSM 20701 / CIP 104284 / JCM 5825 / NCTC 11152) protein is Large ribosomal subunit protein bL17.